The sequence spans 87 residues: Small ribosomal subunit protein eS21 (87 aa).

This sequence belongs to the eukaryotic ribosomal protein eS21 family. As to quaternary structure, component of the small ribosomal subunit. Mature ribosomes consist of a small (40S) and a large (60S) subunit. The 40S subunit contains about 33 different proteins and 1 molecule of RNA (18S). The 60S subunit contains about 49 different proteins and 3 molecules of RNA (25S, 5.8S and 5S).

The protein localises to the cytoplasm. Required for the processing of the 20S rRNA-precursor to mature 18S rRNA in a late step of the maturation of 40S ribosomal subunits. Has a physiological role leading to 18S rRNA stability. This is Small ribosomal subunit protein eS21 (RPS21) from Candida albicans (Yeast).